Here is a 153-residue protein sequence, read N- to C-terminus: 6,7-dimethyl-8-ribityllumazine synthase (153 aa).

5-amino-6-(D-ribitylamino)uracil contacts are provided by residues Phe-22, 56–58 (AFE), and 80–82 (TVI). Position 85–86 (85–86 (ST)) interacts with (2S)-2-hydroxy-3-oxobutyl phosphate. His-88 acts as the Proton donor in catalysis. Phe-113 provides a ligand contact to 5-amino-6-(D-ribitylamino)uracil. Residue Arg-127 participates in (2S)-2-hydroxy-3-oxobutyl phosphate binding.

The protein belongs to the DMRL synthase family. As to quaternary structure, forms an icosahedral capsid composed of 60 subunits, arranged as a dodecamer of pentamers.

The catalysed reaction is (2S)-2-hydroxy-3-oxobutyl phosphate + 5-amino-6-(D-ribitylamino)uracil = 6,7-dimethyl-8-(1-D-ribityl)lumazine + phosphate + 2 H2O + H(+). The protein operates within cofactor biosynthesis; riboflavin biosynthesis; riboflavin from 2-hydroxy-3-oxobutyl phosphate and 5-amino-6-(D-ribitylamino)uracil: step 1/2. Its function is as follows. Catalyzes the formation of 6,7-dimethyl-8-ribityllumazine by condensation of 5-amino-6-(D-ribitylamino)uracil with 3,4-dihydroxy-2-butanone 4-phosphate. This is the penultimate step in the biosynthesis of riboflavin. This is 6,7-dimethyl-8-ribityllumazine synthase from Actinobacillus pleuropneumoniae (Haemophilus pleuropneumoniae).